Consider the following 427-residue polypeptide: ATP-sensitive inward rectifier potassium channel 12 (427 aa).

The Cytoplasmic segment spans residues 1 to 77 (MTAASRANPY…LADMFTTCVD (77 aa)). Position 75 is an S-nitrosocysteine (Cys-75). A helical membrane pass occupies residues 78-104 (IRWRYMLLIFSLAFLASWLLFGIIFWV). A 1,2-diacyl-sn-glycero-3-phospho-(1D-myo-inositol-4,5-bisphosphate) is bound by residues Arg-79 and Arg-81. Topologically, residues 105 to 129 (IAVAHGDLEPAEGRGRTPCVLQVHG) are extracellular. Cys-123 and Cys-155 form a disulfide bridge. Residues 130–146 (FMAAFLFSIETQTTIGY) constitute an intramembrane region (helical; Pore-forming). K(+) is bound by residues Thr-143, Ile-144, Gly-145, and Tyr-146. Positions 143–148 (TIGYGL) match the Selectivity filter motif. The Extracellular portion of the chain corresponds to 147 to 155 (GLRCVTEEC). The chain crosses the membrane as a helical span at residues 156–183 (PVAVFMVVAQSIVGCIIDSFMIGAIMAK). Positions 183 and 188 each coordinate a 1,2-diacyl-sn-glycero-3-phospho-(1D-myo-inositol-4,5-bisphosphate). Over 184–427 (MGRPKKRAQT…ERPYRRESEI (244 aa)) the chain is Cytoplasmic. Residues 387 to 427 (DEEDEVATDRDGRSPQPEHDFDRLQASSGALERPYRRESEI) are disordered. Basic and acidic residues predominate over residues 393-409 (ATDRDGRSPQPEHDFDR). The PDZ-binding motif lies at 425 to 427 (SEI).

Belongs to the inward rectifier-type potassium channel (TC 1.A.2.1) family. KCNJ12 subfamily. Homotetramer. Forms heteromer with KCNJ4. Can form heteromeric channels with Kir2.6/KCNJ18. Association, via its PDZ-recognition domain, with LIN7A, LIN7B, LIN7C, DLG1, CASK and APBA1 plays a key role in its localization and trafficking. In terms of tissue distribution, highest level in cerebellum. Moderately found in kidney, forebrain and skeletal muscle. Not detected in uterus, liver and pancreas.

It localises to the membrane. The protein resides in the cell membrane. It is found in the sarcolemma. The protein localises to the T-tubule. It carries out the reaction K(+)(in) = K(+)(out). Its activity is regulated as follows. Activated by phosphatidylinositol 4,5-biphosphate (PtdIns(4,5)P2). PtdIns(4,5)P2 binding to the cytoplasmic side of the channel triggers a conformation change leading to channel opening. Inhibited by Ba(2+). Functionally, inward rectifying potassium channel that probably participates in controlling the resting membrane potential in electrically excitable cells. It probably participates in establishing action potential waveform and excitability of neuronal and muscle tissues. Inward rectifier potassium channels are characterized by a greater tendency to allow potassium to flow into the cell rather than out of it. Their voltage dependence is regulated by the concentration of extracellular potassium; as external potassium is raised, the voltage range of the channel opening shifts to more positive voltages. The inward rectification is mainly due to the blockage of outward current by internal magnesium. The sequence is that of ATP-sensitive inward rectifier potassium channel 12 (Kcnj12) from Rattus norvegicus (Rat).